Consider the following 263-residue polypeptide: Tryptophan synthase alpha chain (263 aa).

Residues Glu-47 and Asp-58 each act as proton acceptor in the active site.

The protein belongs to the TrpA family. Tetramer of two alpha and two beta chains.

Its subcellular location is the plastid. It is found in the chloroplast. It carries out the reaction (1S,2R)-1-C-(indol-3-yl)glycerol 3-phosphate + L-serine = D-glyceraldehyde 3-phosphate + L-tryptophan + H2O. It participates in amino-acid biosynthesis; L-tryptophan biosynthesis; L-tryptophan from chorismate: step 5/5. Its function is as follows. The alpha subunit is responsible for the aldol cleavage of indoleglycerol phosphate to indole and glyceraldehyde 3-phosphate. The polypeptide is Tryptophan synthase alpha chain (Pyropia yezoensis (Susabi-nori)).